Consider the following 98-residue polypeptide: NADH-ubiquinone oxidoreductase chain 4L (98 aa).

A run of 3 helical transmembrane segments spans residues 1 to 21 (MSMV…GLLI), 29 to 49 (SLLC…VTIL), and 61 to 81 (IILL…LVMV).

Belongs to the complex I subunit 4L family. Core subunit of respiratory chain NADH dehydrogenase (Complex I) which is composed of 45 different subunits.

It is found in the mitochondrion inner membrane. The enzyme catalyses a ubiquinone + NADH + 5 H(+)(in) = a ubiquinol + NAD(+) + 4 H(+)(out). In terms of biological role, core subunit of the mitochondrial membrane respiratory chain NADH dehydrogenase (Complex I) which catalyzes electron transfer from NADH through the respiratory chain, using ubiquinone as an electron acceptor. Part of the enzyme membrane arm which is embedded in the lipid bilayer and involved in proton translocation. In Taxidea taxus (American badger), this protein is NADH-ubiquinone oxidoreductase chain 4L (MT-ND4L).